The chain runs to 121 residues: Small ribosomal subunit protein uS13 (121 aa).

The disordered stretch occupies residues 97–121 (VRGQRTRTNARTRRGARKTVAGKKK). The span at 100–121 (QRTRTNARTRRGARKTVAGKKK) shows a compositional bias: basic residues.

Belongs to the universal ribosomal protein uS13 family. Part of the 30S ribosomal subunit. Forms a loose heterodimer with protein S19. Forms two bridges to the 50S subunit in the 70S ribosome.

Its function is as follows. Located at the top of the head of the 30S subunit, it contacts several helices of the 16S rRNA. In the 70S ribosome it contacts the 23S rRNA (bridge B1a) and protein L5 of the 50S subunit (bridge B1b), connecting the 2 subunits; these bridges are implicated in subunit movement. Contacts the tRNAs in the A and P-sites. In Synechococcus sp. (strain WH7803), this protein is Small ribosomal subunit protein uS13.